The following is a 448-amino-acid chain: Phosphoglucosamine mutase (448 aa).

The active-site Phosphoserine intermediate is the Ser-104. Residues Ser-104, Asp-241, Asp-243, and Asp-245 each coordinate Mg(2+). Position 104 is a phosphoserine (Ser-104).

It belongs to the phosphohexose mutase family. Requires Mg(2+) as cofactor. Activated by phosphorylation.

It catalyses the reaction alpha-D-glucosamine 1-phosphate = D-glucosamine 6-phosphate. Catalyzes the conversion of glucosamine-6-phosphate to glucosamine-1-phosphate. The polypeptide is Phosphoglucosamine mutase (Nocardioides sp. (strain ATCC BAA-499 / JS614)).